Consider the following 265-residue polypeptide: Interleukin-1 alpha (265 aa).

A propeptide spanning residues 1 to 108 is cleaved from the precursor; the sequence is MAKVPDLFED…DTEEVIMKPR (108 aa). N6-acetyllysine is present on Lys-78. The segment at 78-82 is nuclear localization signal (NLS); the sequence is KKRRL. Ser-83 is subject to Phosphoserine. N-linked (GlcNAc...) asparagine glycosylation is found at Asn-98 and Asn-137.

The protein belongs to the IL-1 family. Monomer. Interacts with TMED10; the interaction mediates the translocation from the cytoplasm into the ERGIC (endoplasmic reticulum-Golgi intermediate compartment) and thereby secretion. Interacts with IL1R1. Interacts with S100A13; this interaction is the first step in the export of IL1A, followed by direct translocation of this complex across the plasma membrane. In terms of processing, acetylated within its nuclear localization sequence, which impacts subcellular localization. Post-translationally, proteolytic processed by CAPN1 in a calcium-dependent manner. Cleavage from 31 kDa precursor to 18 kDa biologically active molecules. Phosphorylated. Phosphorylation greatly enhances susceptibility to digestion and promotes the conversion of pre-IL1A alpha to the biologically active IL1A.

The protein localises to the nucleus. It localises to the cytoplasm. It is found in the secreted. In terms of biological role, cytokine constitutively present intracellularly in nearly all resting non-hematopoietic cells that plays an important role in inflammation and bridges the innate and adaptive immune systems. After binding to its receptor IL1R1 together with its accessory protein IL1RAP, forms the high affinity interleukin-1 receptor complex. Signaling involves the recruitment of adapter molecules such as MYD88, IRAK1 or IRAK4. In turn, mediates the activation of NF-kappa-B and the three MAPK pathways p38, p42/p44 and JNK pathways. Within the cell, acts as an alarmin and cell death results in its liberation in the extracellular space after disruption of the cell membrane to induce inflammation and alert the host to injury or damage. In addition to its role as a danger signal, which occurs when the cytokine is passively released by cell necrosis, directly senses DNA damage and acts as signal for genotoxic stress without loss of cell integrity. The protein is Interleukin-1 alpha (IL1A) of Canis lupus familiaris (Dog).